Reading from the N-terminus, the 188-residue chain is Protein GrpE (188 aa).

Positions 1-10 (MPDPTQNPNV) are enriched in polar residues. The interval 1–35 (MPDPTQNPNVTPELEQHAAPEAAAEAAPESSADVM) is disordered. A compositionally biased stretch (low complexity) spans 19–32 (APEAAAEAAPESSA).

It belongs to the GrpE family. As to quaternary structure, homodimer.

Its subcellular location is the cytoplasm. Functionally, participates actively in the response to hyperosmotic and heat shock by preventing the aggregation of stress-denatured proteins, in association with DnaK and GrpE. It is the nucleotide exchange factor for DnaK and may function as a thermosensor. Unfolded proteins bind initially to DnaJ; upon interaction with the DnaJ-bound protein, DnaK hydrolyzes its bound ATP, resulting in the formation of a stable complex. GrpE releases ADP from DnaK; ATP binding to DnaK triggers the release of the substrate protein, thus completing the reaction cycle. Several rounds of ATP-dependent interactions between DnaJ, DnaK and GrpE are required for fully efficient folding. The protein is Protein GrpE of Azoarcus sp. (strain BH72).